The following is a 73-amino-acid chain: Putative beta-defensin 108A (73 aa).

The first 22 residues, 1–22, serve as a signal peptide directing secretion; the sequence is MRIAVLFFTIFFFMSQVLPAKG. Disulfide bonds link C28–C55, C35–C49, and C39–C56.

The protein belongs to the beta-defensin family.

The protein localises to the secreted. Has antibacterial activity. The chain is Putative beta-defensin 108A from Homo sapiens (Human).